We begin with the raw amino-acid sequence, 248 residues long: DNA repair protein RecO (248 aa).

The protein belongs to the RecO family.

Its function is as follows. Involved in DNA repair and RecF pathway recombination. The sequence is that of DNA repair protein RecO from Bradyrhizobium sp. (strain BTAi1 / ATCC BAA-1182).